The chain runs to 306 residues: HORMA domain-containing protein 2 (306 aa).

Residues 29 to 232 (HESLIMVKKL…TGFHSMKVKV (204 aa)) form the HORMA domain.

In terms of assembly, interacts with HORMAD1. In terms of processing, phosphorylated in a SPO11-dependent manner.

It localises to the nucleus. The protein localises to the chromosome. Functionally, essential for synapsis surveillance during meiotic prophase via the recruitment of ATR activity. Plays a key role in the male mid-pachytene checkpoint and the female meiotic prophase checkpoint: required for efficient build-up of ATR activity on unsynapsed chromosome regions, a process believed to form the basis of meiotic silencing of unsynapsed chromatin (MSUC) and meiotic prophase quality control in both sexes. Required for the DNA double-strand break-independent, BRCA1-dependent activation of ATR on the sex chromosomes that is essential for normal sex body formation. The sequence is that of HORMA domain-containing protein 2 (HORMAD2) from Bos taurus (Bovine).